A 37-amino-acid polypeptide reads, in one-letter code: Large ribosomal subunit protein bL36 (37 aa).

This sequence belongs to the bacterial ribosomal protein bL36 family.

The sequence is that of Large ribosomal subunit protein bL36 from Ureaplasma parvum serovar 3 (strain ATCC 27815 / 27 / NCTC 11736).